The primary structure comprises 148 residues: Protein SprT-like (148 aa).

The 142-residue stretch at 6–147 (LQQLVATISM…CGRCQGPIKL (142 aa)) folds into the SprT-like domain. A Zn(2+)-binding site is contributed by His-67. Glu-68 is an active-site residue. His-71 is a binding site for Zn(2+).

It belongs to the SprT family. Zn(2+) serves as cofactor.

It localises to the cytoplasm. This Lactiplantibacillus plantarum (strain ATCC BAA-793 / NCIMB 8826 / WCFS1) (Lactobacillus plantarum) protein is Protein SprT-like.